The following is a 347-amino-acid chain: Probable nitronate monooxygenase (347 aa).

FMN contacts are provided by residues Asn69, Gln171, Gly176, Gly213, and Gln232–Ser235.

The protein belongs to the nitronate monooxygenase family. NMO class I subfamily. Requires FMN as cofactor.

The enzyme catalyses 3 propionate 3-nitronate + 3 O2 + H2O = 3 3-oxopropanoate + 2 nitrate + nitrite + H2O2 + 3 H(+). In terms of biological role, nitronate monooxygenase that uses molecular oxygen to catalyze the oxidative denitrification of alkyl nitronates. Acts on propionate 3-nitronate (P3N), the presumed physiological substrate. Probably functions in the detoxification of P3N, a metabolic poison produced by plants and fungi as a defense mechanism. This Bacillus subtilis (strain 168) protein is Probable nitronate monooxygenase (yrpB).